The chain runs to 206 residues: 2-phospho-L-lactate guanylyltransferase (206 aa).

Belongs to the CofC family. In terms of assembly, homodimer.

The enzyme catalyses (2S)-2-phospholactate + GTP + H(+) = (2S)-lactyl-2-diphospho-5'-guanosine + diphosphate. Its pathway is cofactor biosynthesis; coenzyme F420 biosynthesis. In terms of biological role, guanylyltransferase that catalyzes the activation of (2S)-2-phospholactate (2-PL) as (2S)-lactyl-2-diphospho-5'-guanosine, via the condensation of 2-PL with GTP. It is involved in the biosynthesis of coenzyme F420, a hydride carrier cofactor. The polypeptide is 2-phospho-L-lactate guanylyltransferase (Archaeoglobus profundus (strain DSM 5631 / JCM 9629 / NBRC 100127 / Av18)).